The following is a 339-amino-acid chain: Ketol-acid reductoisomerase (NADP(+)) (339 aa).

A KARI N-terminal Rossmann domain is found at 1-182 (MRVYYDRDAD…GGGRAGIIET (182 aa)). Residues 24-27 (YGSQ), arginine 48, serine 51, serine 53, and 83-86 (DELQ) each bind NADP(+). The active site involves histidine 108. Glycine 134 contacts NADP(+). Residues 183–328 (SFREETETDL…ARLRDMMPWI (146 aa)) enclose the KARI C-terminal knotted domain. Mg(2+) contacts are provided by aspartate 191, glutamate 195, glutamate 227, and glutamate 231. Serine 252 lines the substrate pocket.

Belongs to the ketol-acid reductoisomerase family. It depends on Mg(2+) as a cofactor.

It catalyses the reaction (2R)-2,3-dihydroxy-3-methylbutanoate + NADP(+) = (2S)-2-acetolactate + NADPH + H(+). The enzyme catalyses (2R,3R)-2,3-dihydroxy-3-methylpentanoate + NADP(+) = (S)-2-ethyl-2-hydroxy-3-oxobutanoate + NADPH + H(+). It functions in the pathway amino-acid biosynthesis; L-isoleucine biosynthesis; L-isoleucine from 2-oxobutanoate: step 2/4. It participates in amino-acid biosynthesis; L-valine biosynthesis; L-valine from pyruvate: step 2/4. Involved in the biosynthesis of branched-chain amino acids (BCAA). Catalyzes an alkyl-migration followed by a ketol-acid reduction of (S)-2-acetolactate (S2AL) to yield (R)-2,3-dihydroxy-isovalerate. In the isomerase reaction, S2AL is rearranged via a Mg-dependent methyl migration to produce 3-hydroxy-3-methyl-2-ketobutyrate (HMKB). In the reductase reaction, this 2-ketoacid undergoes a metal-dependent reduction by NADPH to yield (R)-2,3-dihydroxy-isovalerate. The sequence is that of Ketol-acid reductoisomerase (NADP(+)) from Afipia carboxidovorans (strain ATCC 49405 / DSM 1227 / KCTC 32145 / OM5) (Oligotropha carboxidovorans).